The chain runs to 464 residues: E3 ubiquitin-protein ligase ITT1 (464 aa).

Positions 176 to 455 are TRIAD supradomain; the sequence is SNYHCCICME…EAYSGCYGRL (280 aa). Residues cysteine 180, cysteine 183, cysteine 207, cysteine 210, cysteine 290, cysteine 300, cysteine 316, cysteine 319, cysteine 402, and cysteine 405 each contribute to the Zn(2+) site. The RING-type 1 zinc-finger motif lies at 180-236; that stretch reads CCICMEMEKGVRMIKLPCENANVEHYLCRGCAKSYFTAMIQENRISSVRCPQCEYKE. The segment at 267–338 adopts an IBR-type zinc-finger fold; it reads DTELCERYEK…HAWHGYNNKC (72 aa). The RING-type 2; atypical zinc finger occupies 402 to 431; that stretch reads CPKCKVVVERSEGCNKMKCEVCGTLFCFIC. Cysteine 415 is an active-site residue. The Zn(2+) site is built by cysteine 420, cysteine 423, cysteine 428, cysteine 431, histidine 443, and cysteine 451.

Belongs to the RBR family. RNF14 subfamily. As to quaternary structure, interacts with translation release factors eRF1 (SUP45) and eRF3 (SUP35) in vitro.

The catalysed reaction is [E2 ubiquitin-conjugating enzyme]-S-ubiquitinyl-L-cysteine + [acceptor protein]-L-lysine = [E2 ubiquitin-conjugating enzyme]-L-cysteine + [acceptor protein]-N(6)-ubiquitinyl-L-lysine.. The protein operates within protein modification; protein ubiquitination. Functionally, E3 ubiquitin-protein ligase involved in translation quality control. Involved in the rescue of stalled ribosomes by promoting ubiquitination and degradation of proteins on stalled ribosomes. Specifically required to resolve RNA-protein cross-links caused by reactive aldehydes, which trigger translation stress by stalling ribosomes: acts by catalying 'Lys-6'-linked ubiquitination of RNA-protein cross-links, leading to their degradation. Interacts with the translation termination factors eRF1 (SUP45) and eRF3 (SUP35); overexpression decreases the efficiency of translation termination. This is E3 ubiquitin-protein ligase ITT1 from Saccharomyces cerevisiae (strain ATCC 204508 / S288c) (Baker's yeast).